The following is a 22-amino-acid chain: Mu-conotoxin CnIIIC (22 aa).

Gln-1 is subject to Pyrrolidone carboxylic acid; partial. Intrachain disulfides connect Cys-3–Cys-15, Cys-4–Cys-21, and Cys-10–Cys-22. Cys-22 carries the cysteine amide modification.

Belongs to the conotoxin M superfamily. As to expression, expressed by the venom duct.

Its subcellular location is the secreted. In terms of biological role, mu-conotoxins block voltage-gated sodium channels (Nav). This synthetic toxin blocks both voltage-gated sodium channels and nicotinic acetylcholine receptor (nAChR). Inhibits the skeletal muscle rNav1.4/SCN4A (IC(50)=1.3 nM) and the brain rNav1.2/SCN2A in a long-lasting manner. A low inhibition is also observed on neuronal mNav1.6/SCN8A and mNav1.7/SCN9A. Modestly blocks nAChR alpha-3/beta-2 subtype (IC(50)=450 nM) (partially reversible) and, to a lesser extent, alpha-7 and alpha-4/beta-2 subtypes (reversible). In vitro, decreases twitch tension in mouse hemidiaphragms (IC(50)=150 nM), and displays a high blocking effect in mouse extensor digitorum longus muscles (IC(50)=46 nM). In Conus consors (Singed cone), this protein is Mu-conotoxin CnIIIC.